The sequence spans 1581 residues: Mediator of RNA polymerase II transcription subunit 1 (1581 aa).

Positions 1–670 (MKAQGETEES…YGSSPLERQN (670 aa)) are interaction with the Mediator complex and THRA. Positions 16–590 (MSSLLERLHA…SIKDRHESVG (575 aa)) are interaction with ESR1. Interaction with the Mediator complex regions lie at residues 108 to 212 (FYVE…GYLT) and 215 to 390 (SGGH…SLQG). An interaction with THRA region spans residues 405 to 644 (PLILNLIRHQ…MAGNTKNHPM (240 aa)). An interaction with VDR region spans residues 542–788 (PASSPGYGMT…TDILSDIAEE (247 aa)). S588 carries the post-translational modification Phosphoserine. The LXXLL motif 1 motif lies at 604-608 (LTSLL). Disordered stretches follow at residues 609 to 705 (QITG…HQTE), 791 to 819 (KLPSTSDDCPAIGTPLRDSSSSGHSQSTL), 868 to 895 (LSNSQSQSGFGEEYFDESSQSGDNDDFK), and 947 to 1566 (EHHS…DFMI). Residues 622–632 (PTPPHHTPPPV) show a composition bias toward pro residues. Residues 622–701 (PTPPHHTPPP…SSRLPPEKPK (80 aa)) form an interaction with PPARGC1A and THRA region. Residues 645–649 (LMNLL) carry the LXXLL motif 2 motif. Over residues 655–675 (QDFSTLYGSSPLERQNSSSGS) the composition is skewed to polar residues. Residues 656–1065 (DFSTLYGSSP…TPPIPKITIQ (410 aa)) are interaction with ESR1. Residue S664 is modified to Phosphoserine. Residues 681–715 (CSGSNKTKKKESSRLPPEKPKHQTEDDFQRELFSM) form an interaction with GATA1 region. Residues 690 to 705 (KESSRLPPEKPKHQTE) show a composition bias toward basic and acidic residues. S794 bears the Phosphoserine mark. Phosphothreonine is present on T804. Over residues 807 to 819 (RDSSSSGHSQSTL) the composition is skewed to polar residues. Residues 874–901 (QSGFGEEYFDESSQSGDNDDFKGFASQA) carry the Integrase domain-binding motif (IBM) motif. Residues S886 and S952 each carry the phosphoserine modification. The segment covering 962 to 973 (LGKEKTQKRVKE) has biased composition (basic and acidic residues). Residue T1031 is modified to Phosphothreonine; by MAPK1 or MAPK3. The segment covering 1033 to 1050 (PTSTGGSKSPGSSGRSQT) has biased composition (low complexity). Phosphothreonine is present on residues T1050 and T1056. 3 stretches are compositionally biased toward low complexity: residues 1077–1093 (SSHSQYTSSGSVSSSGS), 1100–1111 (SSSSSSSSASTS), and 1119–1156 (SEGSSSSKLSSSMYSSQGSSGSSQSKNSSQSGGKPGSS). S1156 carries the phosphoserine modification. Over residues 1162-1195 (GLSSGSSSTKMKPQGKPSSLMNPSLSKPNISPSH) the composition is skewed to polar residues. Position 1177 is an N6-acetyllysine (K1177). S1207 bears the Phosphoserine mark. The residue at position 1215 (T1215) is a Phosphothreonine. 2 stretches are compositionally biased toward low complexity: residues 1218 to 1227 (SSKAKSPISS) and 1234 to 1293 (MSGT…SKGK). Phosphoserine is present on S1223. The interval 1249–1421 (LGSSGSLSQK…KPGESSGEGL (173 aa)) is interaction with TP53. A Phosphoserine modification is found at S1302. Residues 1330 to 1345 (GVSTNSSSHPMSSKHN) are compositionally biased toward polar residues. Residue S1347 is modified to Phosphoserine. The segment covering 1352-1364 (QGKREKSDKDKSK) has biased composition (basic and acidic residues). Residues S1403 and S1433 each carry the phosphoserine modification. 2 stretches are compositionally biased toward polar residues: residues 1425 to 1440 (MASSKNYGSPLISGST) and 1448 to 1482 (PSHSKSPAYTPQNLDSESESGSSIAEKSYQNSPSS). T1440 bears the Phosphothreonine mark. The residue at position 1457 (T1457) is a Phosphothreonine; by MAPK1 or MAPK3. S1463, S1465, S1479, S1481, and S1482 each carry phosphoserine. The segment covering 1496–1505 (KHKKHKKEKK) has biased composition (basic residues). Residues 1506-1522 (KVKDKDRDRDRDKDRDK) are compositionally biased toward basic and acidic residues. The residue at position 1529 (K1529) is an N6-acetyllysine. Residues 1533–1552 (WSKSPISSDQSLSMTSNTIL) are compositionally biased toward polar residues.

It belongs to the Mediator complex subunit 1 family. In terms of assembly, component of the Mediator complex, which is composed of MED1, MED4, MED6, MED7, MED8, MED9, MED10, MED11, MED12, MED13, MED13L, MED14, MED15, MED16, MED17, MED18, MED19, MED20, MED21, MED22, MED23, MED24, MED25, MED26, MED27, MED29, MED30, MED31, CCNC, CDK8 and CDC2L6/CDK11. The MED12, MED13, CCNC and CDK8 subunits form a distinct module termed the CDK8 module. Mediator containing the CDK8 module is less active than Mediator lacking this module in supporting transcriptional activation. Individual preparations of the Mediator complex lacking one or more distinct subunits have been variously termed ARC, CRSP, DRIP, PC2, SMCC and TRAP. This subunit specifically interacts with a number of nuclear receptors in a ligand-dependent fashion including AR, ESR1, ESR2, PPARA, PPARG, RORA, RXRA, RXRG, THRA, THRB and VDR. Interacts with CTNNB1, GABPA, GLI3, PPARGC1A and TP53. Interacts with GATA1 and YWHAH. Interacts with CLOCK; this interaction requires the presence of THRAP3. Interacts with CCAR1. Interacts with NR4A3. Interacts (via IBM motif) with PSIP1 (via IBD domain); phosphorylation increases its affinity for PSIP1. Interacts with USP22. Phosphorylated by MAPK1 or MAPK3 during G2/M phase which may enhance protein stability and promote entry into the nucleolus. Phosphorylation increases its interaction with PSIP1.

The protein resides in the nucleus. Its function is as follows. Component of the Mediator complex, a coactivator involved in the regulated transcription of nearly all RNA polymerase II-dependent genes. Mediator functions as a bridge to convey information from gene-specific regulatory proteins to the basal RNA polymerase II transcription machinery. Mediator is recruited to promoters by direct interactions with regulatory proteins and serves as a scaffold for the assembly of a functional preinitiation complex with RNA polymerase II and the general transcription factors. Acts as a coactivator for GATA1-mediated transcriptional activation during erythroid differentiation of K562 erythroleukemia cells. This Pongo abelii (Sumatran orangutan) protein is Mediator of RNA polymerase II transcription subunit 1 (MED1).